A 350-amino-acid polypeptide reads, in one-letter code: Probable poly-beta-1,6-N-acetyl-D-glucosamine export protein (350 aa).

A run of 10 helical transmembrane segments spans residues 7–29, 44–66, 79–101, 116–138, 145–167, 187–204, 211–233, 243–262, 269–291, and 306–328; these read ELVY…TQIT, FYIR…LLTT, TRVK…SESL, LLGQ…SYII, LFNS…YYFT, IIFG…MGYN, FLER…FIAL, SFSY…ILGI, ILFN…HPII, and TMVF…GMIL.

The protein belongs to the acyltransferase 3 family.

The protein localises to the cell membrane. Its function is as follows. Presumably involved in the export of the biofilm adhesin polysaccharide poly-beta-1,6-N-acetyl-D-glucosamine (PNAG, also referred to as PIA) across the cell membrane. The polypeptide is Probable poly-beta-1,6-N-acetyl-D-glucosamine export protein (icaC) (Staphylococcus aureus (strain Mu50 / ATCC 700699)).